A 284-amino-acid chain; its full sequence is ATP phosphoribosyltransferase (284 aa).

It belongs to the ATP phosphoribosyltransferase family. Long subfamily. Requires Mg(2+) as cofactor.

The protein resides in the cytoplasm. The enzyme catalyses 1-(5-phospho-beta-D-ribosyl)-ATP + diphosphate = 5-phospho-alpha-D-ribose 1-diphosphate + ATP. It participates in amino-acid biosynthesis; L-histidine biosynthesis; L-histidine from 5-phospho-alpha-D-ribose 1-diphosphate: step 1/9. Feedback inhibited by histidine. Functionally, catalyzes the condensation of ATP and 5-phosphoribose 1-diphosphate to form N'-(5'-phosphoribosyl)-ATP (PR-ATP). Has a crucial role in the pathway because the rate of histidine biosynthesis seems to be controlled primarily by regulation of HisG enzymatic activity. This is ATP phosphoribosyltransferase from Methanococcoides burtonii (strain DSM 6242 / NBRC 107633 / OCM 468 / ACE-M).